A 356-amino-acid chain; its full sequence is 5-formaminoimidazole-4-carboxamide-1-(beta)-D-ribofuranosyl 5'-monophosphate synthetase (356 aa).

His27 and Ser94 together coordinate 5-amino-1-(5-phospho-beta-D-ribosyl)imidazole-4-carboxamide. The ATP-grasp domain maps to 116 to 333 (RCLAWESDRE…YSDLIEKGLS (218 aa)). ATP-binding positions include 145–196 (AELI…TRYY) and Glu226. Residue Asn255 coordinates 5-amino-1-(5-phospho-beta-D-ribosyl)imidazole-4-carboxamide. Mg(2+) is bound by residues Glu293 and Glu306.

Belongs to the phosphohexose mutase family. Mg(2+) is required as a cofactor. Requires Mn(2+) as cofactor.

The enzyme catalyses 5-amino-1-(5-phospho-beta-D-ribosyl)imidazole-4-carboxamide + formate + ATP = 5-formamido-1-(5-phospho-D-ribosyl)imidazole-4-carboxamide + ADP + phosphate. The protein operates within purine metabolism; IMP biosynthesis via de novo pathway; 5-formamido-1-(5-phospho-D-ribosyl)imidazole-4-carboxamide from 5-amino-1-(5-phospho-D-ribosyl)imidazole-4-carboxamide (formate route): step 1/1. Functionally, catalyzes the ATP- and formate-dependent formylation of 5-aminoimidazole-4-carboxamide-1-beta-d-ribofuranosyl 5'-monophosphate (AICAR) to 5-formaminoimidazole-4-carboxamide-1-beta-d-ribofuranosyl 5'-monophosphate (FAICAR) in the absence of folates. The polypeptide is 5-formaminoimidazole-4-carboxamide-1-(beta)-D-ribofuranosyl 5'-monophosphate synthetase (Methanothrix thermoacetophila (strain DSM 6194 / JCM 14653 / NBRC 101360 / PT) (Methanosaeta thermophila)).